The sequence spans 271 residues: Tumor necrosis factor receptor superfamily member 4 (271 aa).

A signal peptide spans 1–19; it reads MYVWVQQPTAFLLLGLSLG. Residues 20-210 lie on the Extracellular side of the membrane; that stretch reads VTVKLNCVKD…TPTLVAPEGP (191 aa). TNFR-Cys repeat units follow at residues 25–60 and 61–102; these read NCVKDTYPSGHKCCRECQPGHGMVSRCDHTRDTVCH and PCEP…DTVC. Intrachain disulfides connect cysteine 26/cysteine 37, cysteine 38/cysteine 51, cysteine 41/cysteine 59, cysteine 62/cysteine 76, cysteine 79/cysteine 94, cysteine 82/cysteine 102, cysteine 104/cysteine 122, and cysteine 125/cysteine 138. A TNFR-Cys 3; truncated repeat occupies 103–123; sequence QCRPGTQPRQDSSHKLGVDCV. A TNFR-Cys 4 repeat occupies 124 to 164; it reads PCPPGHFSPGSNQACKPWTNCTLSGKQIRHPASNSLDTVCE. N-linked (GlcNAc...) asparagine glycosylation occurs at asparagine 143. Cysteines 144 and 163 form a disulfide. Residues 211 to 235 form a helical membrane-spanning segment; that stretch reads AFAVILGLGLGLLAPLTVLLALYLL. At 236–271 the chain is on the cytoplasmic side; sequence RKAWRSPNTPKPCWGNSFRTPIQEEQTDTHFTLAKI.

As to quaternary structure, interacts with TRAF2, TRAF3 and TRAF5. In terms of tissue distribution, activated T-cells.

It is found in the membrane. Its function is as follows. Receptor for TNFSF4/OX40L/GP34. Is a costimulatory molecule implicated in long-term T-cell immunity. This Rattus norvegicus (Rat) protein is Tumor necrosis factor receptor superfamily member 4 (Tnfrsf4).